Here is an 833-residue protein sequence, read N- to C-terminus: Enhancer of filamentation 1 (833 aa).

The SH3 domain occupies A3–G65. Residues Y91, Y163, Y165, Y176, Y188, Y213, and Y222 each carry the phosphotyrosine modification. Residues E237–G258 form a disordered region. Basic and acidic residues predominate over residues Q248–G258. S295 bears the Phosphoserine mark. Disordered stretches follow at residues S297 to Y316, E326 to L403, and P560 to S623. A compositionally biased stretch (polar residues) spans Q304–D314. Y316 bears the Phosphotyrosine mark. Over residues T331–V343 the composition is skewed to basic and acidic residues. Positions N350–F833 are interacts with CTTN. The short motif at D359–D362 is the Caspase cleavage related site element. Position 368 is a phosphoserine (S368). Residues S368–S396 show a composition bias toward low complexity. Polar residues predominate over residues H564–Q586. Residues F709–G759 are divergent helix-loop-helix motif. The interval F709–F833 is required for interaction with PLK1. Position 779 is a phosphoserine (S779). Phosphothreonine is present on T803.

The protein belongs to the CAS family. In terms of assembly, homodimer. Forms heterodimers with BCAR1/p130cas. Forms complexes with PTK2B/RAFTK, adapter protein CRKL and LYN kinase. Part of a complex composed of NEDD9, AURKA and CTTN; within the complex NEDD9 acts as a scaffold protein and is required for complex formation. Part of a ternary complex composed of SMAD3, ITCH/AIP4 and NEDD9/HEF1; within the complex NEDD9/HEF1 interacts (via N-terminus) with ITCH/AIP4 (via WW domains); the complex mediates ubiquitination and proteasomal degradation of NEDD9/HEF1. Interacts with SMAD3; the interaction promotes NEDD9 ubiquitination and proteasomal degradation. Interacts with ID2. Interacts with CTTN (via N-terminus). Interacts with MICAL. Interacts with TXNL4/DIM1. Interacts with BCAR3 (via Ras-GEF domain). Interacts with SH2D3C isoform 1 and isoform 2. Interacts with ECT2. Interacts with PTPN11/SHP-2 (via SH2 domains); the interaction is enhanced when NEDD9/CAS-L is tyrosine phosphorylated. Interacts (via C-terminus) with PLK1 (via polo box domains). Interacts with NKX2-5. Interacts with SMAD3; the interaction is inhibited by oxidation of NEDD9. Interacts with NEDD9/HEF1; interaction is induced by CXCL12 promotion of ABL-mediated phosphorylation of NEDD9/HEF1. Interacts (via SH3 domain) with PTK2/FAK. Interacts with FYN; in the presence of PTK2. Interacts with INPPL1/SHIP2. Polyubiquitinated by ITCH/AIP4, leading to proteasomal degradation. In terms of processing, PTK2/FAK1 phosphorylates the protein at the YDYVHL motif (conserved among all cas proteins) following integrin stimulation. The SRC family kinases (FYN, SRC, LCK and CRK) are recruited to the phosphorylated sites and can phosphorylate other tyrosine residues. Ligation of either integrin beta-1 or B-cell antigen receptor on tonsillar B-cells and B-cell lines promotes tyrosine phosphorylation and both integrin and BCR-mediated tyrosine phosphorylation requires an intact actin network. Phosphorylation is required to recruit NEDD9 to T-cell receptor microclusters at the periphery of newly formed immunological synapses. In fibroblasts transformation with oncogene v-ABL results in an increase in tyrosine phosphorylation. Transiently phosphorylated following CD3 cross-linking and this phosphorylated form binds to CRKL and C3G. A mutant lacking the SH3 domain is phosphorylated upon CD3 cross-linking but not upon integrin beta-1 cross-linking. Tyrosine phosphorylation occurs upon stimulation of the G-protein coupled C1a calcitonin receptor. Calcitonin-stimulated tyrosine phosphorylation is mediated by calcium- and protein kinase C-dependent mechanisms and requires the integrity of the actin cytoskeleton. Phosphorylation at Ser-368 induces proteasomal degradation. Phosphorylated by LYN. Phosphorylation at Ser-779 by CSNK1D or CSNK1E, or phosphorylation of Thr-803 by CSNK1E enhances the interaction of NEDD9 with PLK1. As to expression, expressed in splenic lymphocytes (at protein level). Expressed in T-cells (at protein level). Expressed in the thymus. Expressed throughout the brain however particularly abundant in the cortex and hippocampus.

It localises to the cytoplasm. The protein resides in the cell cortex. The protein localises to the nucleus. Its subcellular location is the golgi apparatus. It is found in the cell projection. It localises to the lamellipodium. The protein resides in the cell junction. The protein localises to the focal adhesion. Its subcellular location is the cytoskeleton. It is found in the spindle pole. It localises to the cilium. The protein resides in the cilium basal body. The protein localises to the basolateral cell membrane. In terms of biological role, scaffolding protein which plays a central coordinating role for tyrosine-kinase-based signaling related to cell adhesion. As a focal adhesion protein, plays a role in embryonic fibroblast migration. May play an important role in integrin beta-1 or B cell antigen receptor (BCR) mediated signaling in B- and T-cells. Integrin beta-1 stimulation leads to recruitment of various proteins including CRKl and SHPTP2 to the tyrosine phosphorylated form. Promotes adhesion and migration of lymphocytes; as a result required for the correct migration of lymphocytes to the spleen and other secondary lymphoid organs. Plays a role in the organization of T-cell F-actin cortical cytoskeleton and the centralization of T-cell receptor microclusters at the immunological synapse. Negatively regulates cilia outgrowth in polarized cysts. Modulates cilia disassembly via activation of AURKA-mediated phosphorylation of HDAC6 and subsequent deacetylation of alpha-tubulin. Positively regulates RANKL-induced osteoclastogenesis. Required for the maintenance of hippocampal dendritic spines in the dentate gyrus and CA1 regions, thereby involved in spatial learning and memory. The polypeptide is Enhancer of filamentation 1 (Mus musculus (Mouse)).